Consider the following 500-residue polypeptide: Trehalose-6-phosphate synthase (500 aa).

Residue Arg-28 participates in D-glucose 6-phosphate binding. Position 48–49 (48–49 (GG)) interacts with UDP-alpha-D-glucose. 2 residues coordinate D-glucose 6-phosphate: Tyr-108 and Asp-162. Residues Arg-304 and Lys-309 each contribute to the UDP-alpha-D-glucose site. Arg-342 serves as a coordination point for D-glucose 6-phosphate. 407–411 (LVAKE) serves as a coordination point for UDP-alpha-D-glucose.

The protein belongs to the glycosyltransferase 20 family. As to quaternary structure, homotetramer.

The catalysed reaction is ADP-alpha-D-glucose + D-glucose 6-phosphate = alpha,alpha-trehalose 6-phosphate + ADP + H(+). The enzyme catalyses CDP-alpha-D-glucose + D-glucose 6-phosphate = alpha,alpha-trehalose 6-phosphate + CDP + H(+). It catalyses the reaction GDP-alpha-D-glucose + D-glucose 6-phosphate = alpha,alpha-trehalose 6-phosphate + GDP + H(+). It carries out the reaction TDP-alpha-D-glucose + D-glucose 6-phosphate = 5-methyl-UDP + alpha,alpha-trehalose 6-phosphate + H(+). The catalysed reaction is D-glucose 6-phosphate + UDP-alpha-D-glucose = alpha,alpha-trehalose 6-phosphate + UDP + H(+). It functions in the pathway glycan biosynthesis; trehalose biosynthesis. Functionally, probably involved in the osmoprotection via the biosynthesis of trehalose and in the production of glycogen and alpha-glucan via the TreS-Pep2 branch involved in the biosynthesis of maltose-1-phosphate (M1P). Catalyzes the transfer of glucose from UDP-glucose (UDP-Glc) to D-glucose 6-phosphate (Glc-6-P) to form trehalose-6-phosphate. Probably also able to use ADP-Glc, CDP-Glc, GDP-Glc and TDP-Glc as glucosyl donors. This Mycobacterium bovis (strain ATCC BAA-935 / AF2122/97) protein is Trehalose-6-phosphate synthase.